Consider the following 819-residue polypeptide: Glycine-rich domain-containing protein 1 (819 aa).

Its function is as follows. Plays a regulatory role in abscisic acid (ABA) signaling and tolerance to abiotic stress during germination. May be involved in the regulation of the ABI transcriptional factors. This is Glycine-rich domain-containing protein 1 from Arabidopsis thaliana (Mouse-ear cress).